The chain runs to 88 residues: Small ribosomal subunit protein uS17 (88 aa).

The protein belongs to the universal ribosomal protein uS17 family. As to quaternary structure, part of the 30S ribosomal subunit.

Functionally, one of the primary rRNA binding proteins, it binds specifically to the 5'-end of 16S ribosomal RNA. The protein is Small ribosomal subunit protein uS17 of Lactobacillus delbrueckii subsp. bulgaricus (strain ATCC 11842 / DSM 20081 / BCRC 10696 / JCM 1002 / NBRC 13953 / NCIMB 11778 / NCTC 12712 / WDCM 00102 / Lb 14).